Reading from the N-terminus, the 503-residue chain is Proton-coupled zinc antiporter SLC30A1 (503 aa).

Over 1–10 the chain is Cytoplasmic; sequence MGCWGRNRGR. A helical transmembrane segment spans residues 11–31; the sequence is LLCMLLLTFMFMVLEVVVSRV. Over 32 to 35 the chain is Extracellular; it reads TASL. Residues 36 to 56 traverse the membrane as a helical segment; that stretch reads AMLSDSFHMLSDVLALVVALV. Positions 43 and 47 each coordinate Zn(2+). At 57–78 the chain is on the cytoplasmic side; that stretch reads AERFARRTHATQKNTFGWIRAE. A helical membrane pass occupies residues 79–99; it reads VMGALVNAIFLTGLCFAILLE. Residues 100–113 are Extracellular-facing; that stretch reads AVERFIEPHEMQQP. The chain crosses the membrane as a helical span at residues 114–134; sequence LVVLSVGVAGLLVNVLGLCLF. At 135-243 the chain is on the cytoplasmic side; it reads HHHSGEGQGA…RAGQLNMRGV (109 aa). Residues 140 to 213 form a disordered region; sequence EGQGAGHGHS…PEKLRSDDPV (74 aa). Residues 145 to 156 are 6 X 2 AA approximate repeats of H-G; sequence GHGHSHGHGHGH. Basic residues predominate over residues 147-165; sequence GHSHGHGHGHLAKGARKAG. A compositionally biased stretch (polar residues) spans 184 to 196; it reads TNTLVANTSNSNG. Basic and acidic residues predominate over residues 200-211; sequence DQAEPEKLRSDD. Residues 244–264 traverse the membrane as a helical segment; that stretch reads FLHVLGDALGSVIVVVNALVF. Residues His246 and Asp250 each contribute to the Zn(2+) site. The Extracellular segment spans residues 265–303; it reads YFNWKGCTEDDFCTNPCFPDPCKSSVEIINSTQAPMRDA. Asn294 is a glycosylation site (N-linked (GlcNAc...) asparagine). The chain crosses the membrane as a helical span at residues 304–324; sequence GPCWVLYLDPTLCIIMVCILL. Residues 325–503 are Cytoplasmic-facing; sequence YTTYPLLKES…VPNKQPESSL (179 aa). Position 502 is a phosphoserine (Ser502).

Belongs to the cation diffusion facilitator (CDF) transporter (TC 2.A.4) family. SLC30A subfamily. Homodimer. Interacts with TMEM163. Interacts and forms a complex with TMC6 and TMC8; the interaction regulates zinc transport into the ER. Widely expressed.

It localises to the cell membrane. Its subcellular location is the basolateral cell membrane. The protein resides in the cytoplasmic vesicle membrane. The protein localises to the cytoplasm. It is found in the endoplasmic reticulum membrane. It localises to the golgi apparatus membrane. Its subcellular location is the nucleus membrane. It carries out the reaction Zn(2+)(in) + 2 H(+)(out) = Zn(2+)(out) + 2 H(+)(in). In terms of biological role, zinc ion:proton antiporter that could function at the plasma membrane mediating zinc efflux from cells against its electrochemical gradient protecting them from intracellular zinc accumulation and toxicity. Alternatively, could prevent the transport to the plasma membrane of CACNB2, the L-type calcium channels regulatory subunit, through a yet to be defined mechanism. By modulating the expression of these channels at the plasma membrane, could prevent calcium and zinc influx into cells. By the same mechanism, could also prevent L-type calcium channels-mediated heavy metal influx into cells. In some cells, could also function as a zinc ion:proton antiporter mediating zinc entry into the lumen of cytoplasmic vesicles. In macrophages, can increase zinc ions concentration into the lumen of cytoplasmic vesicles containing engulfed bacteria and could help inactivate them. Forms a complex with TMC6/EVER1 and TMC8/EVER2 at the ER membrane of keratynocytes which facilitates zinc uptake into the ER. Down-regulates the activity of transcription factors induced by zinc and cytokines. The chain is Proton-coupled zinc antiporter SLC30A1 from Mus musculus (Mouse).